A 115-amino-acid chain; its full sequence is Nucleoid-associated protein NATL1_00191 (115 aa).

The interval 89 to 115 is disordered; the sequence is STSTMKERMEDLTGGFKLNLPGMGEES.

This sequence belongs to the YbaB/EbfC family. Homodimer.

Its subcellular location is the cytoplasm. It localises to the nucleoid. Its function is as follows. Binds to DNA and alters its conformation. May be involved in regulation of gene expression, nucleoid organization and DNA protection. The protein is Nucleoid-associated protein NATL1_00191 of Prochlorococcus marinus (strain NATL1A).